The following is a 216-amino-acid chain: MNKQSINIAQIRREYTHKRLRRADLTLEPMELFERWFRQASTAQLLDLTVVSVATVDQTGQPYQRLVLLKHFDAKGMVFYTNLGSRKAQHLAHNARISLHFPWHALERQVMVLGTAKQLALKEVMHYFSSRPRNSQISAWASSQSSLIDTRDTLVSTFLKFNNYFHQGKVPLPSFWGGYRVHIDSMEFWQGGAYRLHDRFIYQRIASGWRIDRLAP.

Residues 12–15 (RREY) and lysine 70 contribute to the substrate site. Residues 65 to 70 (RLVLLK), 80 to 81 (YT), arginine 86, lysine 87, and glutamine 109 each bind FMN. The substrate site is built by tyrosine 127, arginine 131, and serine 135. Residues 144–145 (QS) and tryptophan 189 contribute to the FMN site. A substrate-binding site is contributed by 195 to 197 (RLH). Arginine 199 lines the FMN pocket.

It belongs to the pyridoxamine 5'-phosphate oxidase family. Homodimer. It depends on FMN as a cofactor.

It carries out the reaction pyridoxamine 5'-phosphate + O2 + H2O = pyridoxal 5'-phosphate + H2O2 + NH4(+). It catalyses the reaction pyridoxine 5'-phosphate + O2 = pyridoxal 5'-phosphate + H2O2. It functions in the pathway cofactor metabolism; pyridoxal 5'-phosphate salvage; pyridoxal 5'-phosphate from pyridoxamine 5'-phosphate: step 1/1. It participates in cofactor metabolism; pyridoxal 5'-phosphate salvage; pyridoxal 5'-phosphate from pyridoxine 5'-phosphate: step 1/1. Catalyzes the oxidation of either pyridoxine 5'-phosphate (PNP) or pyridoxamine 5'-phosphate (PMP) into pyridoxal 5'-phosphate (PLP). This chain is Pyridoxine/pyridoxamine 5'-phosphate oxidase, found in Baumannia cicadellinicola subsp. Homalodisca coagulata.